The following is a 61-amino-acid chain: Probable tautomerase LMOf2365_2536 (61 aa).

Pro2 functions as the Proton acceptor; via imino nitrogen in the catalytic mechanism.

Belongs to the 4-oxalocrotonate tautomerase family.

The polypeptide is Probable tautomerase LMOf2365_2536 (Listeria monocytogenes serotype 4b (strain F2365)).